We begin with the raw amino-acid sequence, 52 residues long: uncharacterized protein (52 aa).

A helical transmembrane segment spans residues Met-7–Phe-27.

It is found in the membrane. This is an uncharacterized protein from Bacillus subtilis (strain 168).